Consider the following 213-residue polypeptide: Deoxyribose-phosphate aldolase (213 aa).

The active-site Proton donor/acceptor is aspartate 89. The active-site Schiff-base intermediate with acetaldehyde is lysine 151. The Proton donor/acceptor role is filled by lysine 180.

This sequence belongs to the DeoC/FbaB aldolase family. DeoC type 1 subfamily.

The protein localises to the cytoplasm. It carries out the reaction 2-deoxy-D-ribose 5-phosphate = D-glyceraldehyde 3-phosphate + acetaldehyde. Its pathway is carbohydrate degradation; 2-deoxy-D-ribose 1-phosphate degradation; D-glyceraldehyde 3-phosphate and acetaldehyde from 2-deoxy-alpha-D-ribose 1-phosphate: step 2/2. Catalyzes a reversible aldol reaction between acetaldehyde and D-glyceraldehyde 3-phosphate to generate 2-deoxy-D-ribose 5-phosphate. This chain is Deoxyribose-phosphate aldolase, found in Finegoldia magna (strain ATCC 29328 / DSM 20472 / WAL 2508) (Peptostreptococcus magnus).